Here is a 324-residue protein sequence, read N- to C-terminus: tRNA N6-adenosine threonylcarbamoyltransferase (324 aa).

Fe cation is bound by residues histidine 107, histidine 111, and tyrosine 127. Residues 127 to 131, aspartate 159, glycine 172, glutamate 176, and asparagine 257 contribute to the substrate site; that span reads YVSGG. Position 285 (aspartate 285) interacts with Fe cation.

This sequence belongs to the KAE1 / TsaD family. Monomer. Component of the KEOPS complex that consists of Kae1, Bud32, Cgi121 and Pcc1; the whole complex dimerizes. Requires Fe(2+) as cofactor.

The protein resides in the cytoplasm. The catalysed reaction is L-threonylcarbamoyladenylate + adenosine(37) in tRNA = N(6)-L-threonylcarbamoyladenosine(37) in tRNA + AMP + H(+). In terms of biological role, required for the formation of a threonylcarbamoyl group on adenosine at position 37 (t(6)A37) in tRNAs that read codons beginning with adenine. Is a component of the KEOPS complex that is probably involved in the transfer of the threonylcarbamoyl moiety of threonylcarbamoyl-AMP (TC-AMP) to the N6 group of A37. Kae1 likely plays a direct catalytic role in this reaction, but requires other protein(s) of the complex to fulfill this activity. This chain is tRNA N6-adenosine threonylcarbamoyltransferase, found in Pyrococcus horikoshii (strain ATCC 700860 / DSM 12428 / JCM 9974 / NBRC 100139 / OT-3).